Consider the following 332-residue polypeptide: Holliday junction branch migration complex subunit RuvB (332 aa).

The interval 1 to 182 (MKLNKNSELK…FGLILKLNYY (182 aa)) is large ATPase domain (RuvB-L). Residues L21, R22, G63, K66, T67, T68, 129 to 131 (EDY), R172, Y182, and R219 contribute to the ATP site. Residue T67 coordinates Mg(2+). Positions 183 to 253 (SEDELELIIK…ISEIALEKLT (71 aa)) are small ATPAse domain (RuvB-S). Residues 256 to 332 (KNGLDDADYT…FKLFKNDKIK (77 aa)) are head domain (RuvB-H). R311 and R316 together coordinate DNA.

The protein belongs to the RuvB family. In terms of assembly, homohexamer. Forms an RuvA(8)-RuvB(12)-Holliday junction (HJ) complex. HJ DNA is sandwiched between 2 RuvA tetramers; dsDNA enters through RuvA and exits via RuvB. An RuvB hexamer assembles on each DNA strand where it exits the tetramer. Each RuvB hexamer is contacted by two RuvA subunits (via domain III) on 2 adjacent RuvB subunits; this complex drives branch migration. In the full resolvosome a probable DNA-RuvA(4)-RuvB(12)-RuvC(2) complex forms which resolves the HJ.

Its subcellular location is the cytoplasm. It catalyses the reaction ATP + H2O = ADP + phosphate + H(+). Functionally, the RuvA-RuvB-RuvC complex processes Holliday junction (HJ) DNA during genetic recombination and DNA repair, while the RuvA-RuvB complex plays an important role in the rescue of blocked DNA replication forks via replication fork reversal (RFR). RuvA specifically binds to HJ cruciform DNA, conferring on it an open structure. The RuvB hexamer acts as an ATP-dependent pump, pulling dsDNA into and through the RuvAB complex. RuvB forms 2 homohexamers on either side of HJ DNA bound by 1 or 2 RuvA tetramers; 4 subunits per hexamer contact DNA at a time. Coordinated motions by a converter formed by DNA-disengaged RuvB subunits stimulates ATP hydrolysis and nucleotide exchange. Immobilization of the converter enables RuvB to convert the ATP-contained energy into a lever motion, pulling 2 nucleotides of DNA out of the RuvA tetramer per ATP hydrolyzed, thus driving DNA branch migration. The RuvB motors rotate together with the DNA substrate, which together with the progressing nucleotide cycle form the mechanistic basis for DNA recombination by continuous HJ branch migration. Branch migration allows RuvC to scan DNA until it finds its consensus sequence, where it cleaves and resolves cruciform DNA. The chain is Holliday junction branch migration complex subunit RuvB from Phytoplasma mali (strain AT).